The chain runs to 132 residues: Small ribosomal subunit protein uS8 (132 aa).

The protein belongs to the universal ribosomal protein uS8 family. In terms of assembly, part of the 30S ribosomal subunit. Contacts proteins S5 and S12.

Its function is as follows. One of the primary rRNA binding proteins, it binds directly to 16S rRNA central domain where it helps coordinate assembly of the platform of the 30S subunit. This is Small ribosomal subunit protein uS8 from Rickettsia felis (strain ATCC VR-1525 / URRWXCal2) (Rickettsia azadi).